The primary structure comprises 429 residues: ATP-dependent Clp protease ATP-binding subunit ClpX (429 aa).

Residues 1 to 54 (MARSKSQKIEGCSFCGRTRAEAEGKIISAKSVAICFECSKICHNLFKEESDKPA) form the ClpX-type ZB domain. The Zn(2+) site is built by Cys-12, Cys-15, Cys-35, and Cys-38. 119–126 (PTGSGKTL) contributes to the ATP binding site.

The protein belongs to the ClpX chaperone family. Component of the ClpX-ClpP complex. Forms a hexameric ring that, in the presence of ATP, binds to fourteen ClpP subunits assembled into a disk-like structure with a central cavity, resembling the structure of eukaryotic proteasomes.

ATP-dependent specificity component of the Clp protease. It directs the protease to specific substrates. Can perform chaperone functions in the absence of ClpP. This chain is ATP-dependent Clp protease ATP-binding subunit ClpX, found in Borrelia duttonii (strain Ly).